The sequence spans 240 residues: Protein unc-119 homolog A (240 aa).

Over residues 1 to 12 (MKVKKGGGGTGS) the composition is skewed to gly residues. The segment at 1–62 (MKVKKGGGGT…PLQGKQPIGP (62 aa)) is disordered. 3 positions are modified to phosphoserine; by CK2: serine 37, serine 39, and serine 41. Tyrosine 131 contributes to the tetradecanoate binding site.

The protein belongs to the PDE6D/unc-119 family. In terms of assembly, may interact with GTP-bound ARL1. Interacts with ARL2 and ARL3 (GTP-bound forms); this promotes the release of myristoylated cargo proteins. Found in a complex with ARL3, RP2 and UNC119; RP2 induces hydrolysis of GTP ARL3 in the complex, leading to the release of UNC119. Interacts with NPHP3 (when myristoylated). Interacts with CYS1 (when myristoylated). Interacts with MACIR; interaction only takes place when UNC119 is not liganded with myristoylated proteins. Interacts with CABP4; in the absence of calcium. Interacts with DNM1; leading to a decrease of DNM1 GTPase activity. Interacts with LCK; this interaction plays a crucial role in activation of LCK. Interacts with FYN. Interacts with RAB11A; in a cell cycle-dependent manner. Interacts with LYN (via SH2 and SH3 domains); leading to LYN activation. Found in a complex with ABL1, ABL2, CRK and UNC119; leading to the inhibition of CRK phosphorylation by ABL kinases. Interacts with CD44. Interacts with KLHL18 (via kelch repeats). Interacts with PPP3CA, PPP3CB and PPP3CC. Interacts with USP48; this interaction promotes UNC119 stability. Phosphorylation suppresses its interaction with KLHL18 and down-regulates its KLHL18-mediated degradation. Phosphorylated more under light conditions than dark conditions. Dephosphorylated by calcineurin. In terms of tissue distribution, localized in photoreceptor synapses in the outer plexiform layer of the retina.

It is found in the cytoplasm. The protein resides in the cytoskeleton. The protein localises to the microtubule organizing center. Its subcellular location is the centrosome. It localises to the spindle. It is found in the spindle pole. Functionally, involved in synaptic functions in photoreceptor cells, the signal transduction in immune cells as a Src family kinase activator, endosome recycling, the uptake of bacteria and endocytosis, protein trafficking in sensory neurons and as lipid-binding chaperone with specificity for a diverse subset of myristoylated proteins. Specifically binds the myristoyl moiety of a subset of N-terminally myristoylated proteins and is required for their localization. Binds myristoylated GNAT1 and is required for G-protein localization and trafficking in sensory neurons. Probably plays a role in trafficking proteins in photoreceptor cells. Plays important roles in mediating Src family kinase signals for the completion of cytokinesis via RAB11A. The chain is Protein unc-119 homolog A (Unc119) from Mus musculus (Mouse).